The chain runs to 133 residues: Ribosome-binding factor A (133 aa).

Belongs to the RbfA family. In terms of assembly, monomer. Binds 30S ribosomal subunits, but not 50S ribosomal subunits or 70S ribosomes.

Its subcellular location is the cytoplasm. One of several proteins that assist in the late maturation steps of the functional core of the 30S ribosomal subunit. Associates with free 30S ribosomal subunits (but not with 30S subunits that are part of 70S ribosomes or polysomes). Required for efficient processing of 16S rRNA. May interact with the 5'-terminal helix region of 16S rRNA. The polypeptide is Ribosome-binding factor A (Cronobacter sakazakii (strain ATCC BAA-894) (Enterobacter sakazakii)).